The following is a 606-amino-acid chain: Double-stranded RNA-binding protein Staufen homolog 2 (606 aa).

DRBM domains follow at residues 8–75 (TPMC…ESSL) and 95–181 (TPTV…ALKN). Disordered regions lie at residues 57–97 (SIKK…ITPT) and 177–205 (QALK…SDAS). The span at 85–97 (ADSNSNPGSITPT) shows a compositional bias: polar residues. Basic and acidic residues predominate over residues 192 to 205 (SEEKKETEENSDAS). DRBM domains are found at residues 207 to 274 (SEIS…ELKK), 307 to 375 (NPIS…QLGY), and 493 to 557 (QPSQ…QLSE). Residues 580-606 (RLAERTESKPTNSGTTAQDCKDSKAVV) form a disordered region. Polar residues predominate over residues 588-597 (KPTNSGTTAQ).

Functionally, RNA-binding protein required for the microtubule-dependent transport of RNAs within polarized cell types. The polypeptide is Double-stranded RNA-binding protein Staufen homolog 2 (stau2) (Danio rerio (Zebrafish)).